A 922-amino-acid chain; its full sequence is ATP-dependent helicase fft3 (922 aa).

Disordered regions lie at residues glutamate 139–arginine 177 and proline 198–asparagine 224. Over residues aspartate 153–serine 166 the composition is skewed to low complexity. Positions proline 207–serine 223 are enriched in acidic residues. Phosphoserine occurs at positions 213 and 219. Residues tyrosine 399–histidine 567 enclose the Helicase ATP-binding domain. Aspartate 412 to threonine 419 provides a ligand contact to ATP. Residues aspartate 518–histidine 521 carry the DEGH box motif. Serine 617 carries the phosphoserine modification. The Helicase C-terminal domain maps to lysine 765–aspartate 922.

The protein belongs to the SNF2/RAD54 helicase family. In terms of assembly, interacts with the GDP-bound form of spi1.

The protein localises to the nucleus. It is found in the chromosome. It catalyses the reaction ATP + H2O = ADP + phosphate + H(+). Functionally, DNA helicase that possesses intrinsic ATP-dependent nucleosome-remodeling activity and is required for heterochromatin organization. Required for maintaining a heterochromatin chromatin structure at centromeres and subtelomeres by protecting these regions from euchromatin assembly. Enhances the nucleotide exchange activity of the pim1 guanine nucleotide exchange factor and abolishes histone-H3-mediated RanGAP inhibition. Involved in the construction of the centromeres. The chain is ATP-dependent helicase fft3 (fft3) from Schizosaccharomyces pombe (strain 972 / ATCC 24843) (Fission yeast).